The primary structure comprises 294 residues: Putative isocitrate dehydrogenase [NAD] subunit-like 4 (294 aa).

The protein belongs to the isocitrate and isopropylmalate dehydrogenases family.

Its function is as follows. Performs an essential role in the oxidative function of the citric acid cycle. The polypeptide is Putative isocitrate dehydrogenase [NAD] subunit-like 4 (IDH4) (Arabidopsis thaliana (Mouse-ear cress)).